Reading from the N-terminus, the 415-residue chain is Putative serine/threonine-protein phosphatase 4 regulatory subunit 1-like (415 aa).

HEAT repeat units lie at residues 86–124 (VMEI…SNFP), 163–202 (LLPR…TEKF), 203–241 (LIPK…RRTQ), and 242–280 (LFPL…RAGL). The segment covering 301–318 (FASGSPAPSSGGNTSPAS) has biased composition (low complexity). The segment at 301-362 (FASGSPAPSS…GPAESPVESC (62 aa)) is disordered.

Functionally, may be a regulatory subunit of serine/threonine-protein phosphatase 4. This Homo sapiens (Human) protein is Putative serine/threonine-protein phosphatase 4 regulatory subunit 1-like (PPP4R1L).